Here is a 470-residue protein sequence, read N- to C-terminus: tRNA-2-methylthio-N(6)-dimethylallyladenosine synthase (470 aa).

Residues 5–122 (RKLYVKSFGC…LPELLAEAKA (118 aa)) enclose the MTTase N-terminal domain. Positions 14, 50, 85, 163, 167, and 170 each coordinate [4Fe-4S] cluster. The 235-residue stretch at 149-383 (RSRGPAAFVT…LLEASKAAFD (235 aa)) folds into the Radical SAM core domain. The 63-residue stretch at 384 to 446 (ESCRGRTFDI…PNSLAGVPAE (63 aa)) folds into the TRAM domain. Positions 439-470 (SLAGVPAEASEPSVSQSPVSSARSRPLAAMEA) are disordered. The segment covering 444–464 (PAEASEPSVSQSPVSSARSRP) has biased composition (low complexity).

It belongs to the methylthiotransferase family. MiaB subfamily. In terms of assembly, monomer. [4Fe-4S] cluster is required as a cofactor.

It localises to the cytoplasm. The enzyme catalyses N(6)-dimethylallyladenosine(37) in tRNA + (sulfur carrier)-SH + AH2 + 2 S-adenosyl-L-methionine = 2-methylsulfanyl-N(6)-dimethylallyladenosine(37) in tRNA + (sulfur carrier)-H + 5'-deoxyadenosine + L-methionine + A + S-adenosyl-L-homocysteine + 2 H(+). Functionally, catalyzes the methylthiolation of N6-(dimethylallyl)adenosine (i(6)A), leading to the formation of 2-methylthio-N6-(dimethylallyl)adenosine (ms(2)i(6)A) at position 37 in tRNAs that read codons beginning with uridine. This chain is tRNA-2-methylthio-N(6)-dimethylallyladenosine synthase, found in Xanthobacter autotrophicus (strain ATCC BAA-1158 / Py2).